Reading from the N-terminus, the 709-residue chain is NAD(P)H-quinone oxidoreductase subunit 5, chloroplastic (709 aa).

Transmembrane regions (helical) follow at residues 9 to 29, 40 to 60, 89 to 109, 125 to 145, 147 to 167, 219 to 239, 257 to 277, 280 to 300, 327 to 347, 354 to 374, 396 to 416, 425 to 445, 540 to 560, and 594 to 614; these read WIIPFVPLPIPIKIGMGLLLF, WAFPNILLLSIVMIFSVDLSI, IDSLTSIMSILITTVGIFVLI, FAYMSLFNTSMLGLLTXSNLI, IYXFWELVGMCSYLLIGFWFT, NEVHFLFVTLCASLLFAGAVA, PTPISALIHAATMVAAGIFLV, LLPLFIVIPYIMNLISLIGII, LGYMMLALGMGSYRAALFHLI, ALLFLGSGSIIHSMEAIVGYS, IAFLVGTLSLCGIPPLACFWS, WLYSPIFAIIAWSTAGLTASY, LFPMLILVLFTLFVGAIAIPF, and FLTNATFSVSIASFGIFTAFL.

It belongs to the complex I subunit 5 family. In terms of assembly, NDH is composed of at least 16 different subunits, 5 of which are encoded in the nucleus.

It localises to the plastid. Its subcellular location is the chloroplast thylakoid membrane. It carries out the reaction a plastoquinone + NADH + (n+1) H(+)(in) = a plastoquinol + NAD(+) + n H(+)(out). It catalyses the reaction a plastoquinone + NADPH + (n+1) H(+)(in) = a plastoquinol + NADP(+) + n H(+)(out). NDH shuttles electrons from NAD(P)H:plastoquinone, via FMN and iron-sulfur (Fe-S) centers, to quinones in the photosynthetic chain and possibly in a chloroplast respiratory chain. The immediate electron acceptor for the enzyme in this species is believed to be plastoquinone. Couples the redox reaction to proton translocation, and thus conserves the redox energy in a proton gradient. The chain is NAD(P)H-quinone oxidoreductase subunit 5, chloroplastic (ndhF) from Pachira aquatica (Guiana chestnut).